Here is a 340-residue protein sequence, read N- to C-terminus: Latency-related protein 1 (340 aa).

Disordered regions lie at residues 13-96 and 254-340; these read AALW…PNRQ and RLPG…PPRP. Tandem repeats lie at residues 27-43 and 59-75. A 2 X 17 AA repeats region spans residues 27–75; the sequence is PTPTHPHSHAPPLPRTPTPSHPHSRAPPLPRAPTPTHPHSHAPPLPRTP. Pro residues predominate over residues 35–73; sequence HAPPLPRTPTPSHPHSRAPPLPRAPTPTHPHSHAPPLPR. Positions 287–307 are enriched in gly residues; sequence ARGGGSGGGRGPGGGRGGPRG. Residues 308-326 are compositionally biased toward basic residues; it reads SRGRGGRGRGGRGGGRRGR.

The protein is Latency-related protein 1 of Human herpesvirus 1 (strain F) (HHV-1).